A 2514-amino-acid chain; its full sequence is Highly reducing polyketide synthase sphB (2514 aa).

Residues 66-486 enclose the Ketosynthase family 3 (KS3) domain; sequence QVPIAICGMA…GANAHVILES (421 aa). Active-site for beta-ketoacyl synthase activity residues include Cys238, His374, and His409. The Malonyl-CoA:ACP transacylase (MAT) domain maps to 580 to 904; sequence MVFTGQGAQW…AIGALHSLNV (325 aa). Residues 950 to 1079 form an N-terminal hotdog fold region; the sequence is HDLLGARVAE…GEVCAQSSAP (130 aa). Positions 950–1240 constitute a PKS/mFAS DH domain; that stretch reads HDLLGARVAE…AADISDTHAA (291 aa). Catalysis depends on His982, which acts as the Proton acceptor; for dehydratase activity. The tract at residues 1089–1240 is C-terminal hotdog fold; that stretch reads PRTLNVRKWY…AADISDTHAA (152 aa). Catalysis depends on Asp1150, which acts as the Proton donor; for dehydratase activity. The tract at residues 1319–1578 is methyltransferase (CMet) domain; sequence WTGLDHEAIS…EPHQVTTTMV (260 aa). One can recognise an Enoyl reductase (ER) domain in the interval 1779-2092; the sequence is GRVNSLHYAR…KGQHIGRVGV (314 aa). The 178-residue stretch at 2120–2297 folds into the Ketoreductase (KR) domain; the sequence is ASYLMVGGLG…ASVVDMGAVE (178 aa). One can recognise a Carrier domain in the interval 2427 to 2504; sequence EAAKLFAVEI…ILGQYAANEV (78 aa). An O-(pantetheine 4'-phosphoryl)serine modification is found at Ser2464.

The cofactor is pantetheine 4'-phosphate.

It carries out the reaction holo-[ACP] + 8 malonyl-CoA + acetyl-CoA + 5 AH2 + 8 NADPH + 16 H(+) = (3R)-hydroxyoctadeca-4,10-dienoyl-[ACP] + 5 A + 8 CO2 + 8 NADP(+) + 9 CoA + 7 H2O. The protein operates within secondary metabolite biosynthesis. Its function is as follows. Highly reducing polyketide synthase; part of the gene cluster that mediates the biosynthesis of sphingofungins, bioactive molecules acting as sphingolipid inhibitors via inhibiting serine palmitoyl transferase (SPT). Within the pathway, sphB catalyzes the first step of sphingofungin biosynthesis by condensing 8 units of malonyl-CoA with one starter unit of acetyl-CoA, leading to an C18 polyketide precursor 3-hydroxyoctadeca-4,10-dienoyl-ACP containing one delta-6 desaturation and one delta-12 desaturation. The PKS sphB does not contain any putative thioesterase domain for releasing the nascent polyketide chain and it has been suggested that aminoacyl transferases can facilitate the polyketide chain release. The aminoacyl transferase sphA uses the sphB product to produce 3-keto-presphingofungin by adding an aminomalonate molecule. SphF then reduces the C-3 ketone of 3-keto-presphingofungin which leads to presphingofungin. The cytochrome P450 monooxygenase sphH converts presphingofungin into sphingofungin B1 which is further converted to sphingofungin B by the dioxygenase sphC. SphC is also able to convert presphingofungin into sphingofungin B2. The acetyltransferase sphE acetylates sphingofungin B to produce sphingofungin C, but can also convert sphingofungin B1 into sphingofungin C1 and sphingofungin B2 into sphingofungin C2. Finally, sphingofungin C can be spontaneously converted into sphingofungin D. In Aspergillus fumigatus (strain CBS 144.89 / FGSC A1163 / CEA10) (Neosartorya fumigata), this protein is Highly reducing polyketide synthase sphB.